Consider the following 266-residue polypeptide: Phosphatidylserine decarboxylase proenzyme (266 aa).

Residues Asp-74, His-135, and Ser-237 each act as charge relay system; for autoendoproteolytic cleavage activity in the active site. Ser-237 functions as the Schiff-base intermediate with substrate; via pyruvic acid; for decarboxylase activity in the catalytic mechanism. Ser-237 is subject to Pyruvic acid (Ser); by autocatalysis.

This sequence belongs to the phosphatidylserine decarboxylase family. PSD-B subfamily. Prokaryotic type I sub-subfamily. In terms of assembly, heterodimer of a large membrane-associated beta subunit and a small pyruvoyl-containing alpha subunit. Requires pyruvate as cofactor. In terms of processing, is synthesized initially as an inactive proenzyme. Formation of the active enzyme involves a self-maturation process in which the active site pyruvoyl group is generated from an internal serine residue via an autocatalytic post-translational modification. Two non-identical subunits are generated from the proenzyme in this reaction, and the pyruvate is formed at the N-terminus of the alpha chain, which is derived from the carboxyl end of the proenzyme. The autoendoproteolytic cleavage occurs by a canonical serine protease mechanism, in which the side chain hydroxyl group of the serine supplies its oxygen atom to form the C-terminus of the beta chain, while the remainder of the serine residue undergoes an oxidative deamination to produce ammonia and the pyruvoyl prosthetic group on the alpha chain. During this reaction, the Ser that is part of the protease active site of the proenzyme becomes the pyruvoyl prosthetic group, which constitutes an essential element of the active site of the mature decarboxylase.

It localises to the cell membrane. It carries out the reaction a 1,2-diacyl-sn-glycero-3-phospho-L-serine + H(+) = a 1,2-diacyl-sn-glycero-3-phosphoethanolamine + CO2. The protein operates within phospholipid metabolism; phosphatidylethanolamine biosynthesis; phosphatidylethanolamine from CDP-diacylglycerol: step 2/2. Catalyzes the formation of phosphatidylethanolamine (PtdEtn) from phosphatidylserine (PtdSer). In Campylobacter jejuni subsp. jejuni serotype O:2 (strain ATCC 700819 / NCTC 11168), this protein is Phosphatidylserine decarboxylase proenzyme.